Reading from the N-terminus, the 89-residue chain is Large ribosomal subunit protein bL27 (89 aa).

The interval 1–24 is disordered; the sequence is MAHKKGTGSTRNGRDSNSKRLGVK.

The protein belongs to the bacterial ribosomal protein bL27 family.

In Synechococcus sp. (strain WH7803), this protein is Large ribosomal subunit protein bL27.